Reading from the N-terminus, the 299-residue chain is 4-diphosphocytidyl-2-C-methyl-D-erythritol kinase (299 aa).

The active site involves lysine 20. 106–116 (PMGGGLGGGSS) is a binding site for ATP. The active site involves aspartate 148.

The protein belongs to the GHMP kinase family. IspE subfamily. Homodimer.

The enzyme catalyses 4-CDP-2-C-methyl-D-erythritol + ATP = 4-CDP-2-C-methyl-D-erythritol 2-phosphate + ADP + H(+). It functions in the pathway isoprenoid biosynthesis; isopentenyl diphosphate biosynthesis via DXP pathway; isopentenyl diphosphate from 1-deoxy-D-xylulose 5-phosphate: step 3/6. Its function is as follows. Catalyzes the phosphorylation of the position 2 hydroxy group of 4-diphosphocytidyl-2C-methyl-D-erythritol. This chain is 4-diphosphocytidyl-2-C-methyl-D-erythritol kinase, found in Yersinia pseudotuberculosis serotype O:1b (strain IP 31758).